Consider the following 397-residue polypeptide: Subtilisin-like serine protease Pen c 1 (397 aa).

The N-terminal stretch at 1 to 19 (MGFLKVLATSLATLAVVDA) is a signal peptide. The propeptide at 20 to 115 (GTLLTASNTD…IEPDMIVNAT (96 aa)) is removed in mature form. Positions 35–113 (SYIVVMNDDV…KYIEPDMIVN (79 aa)) constitute an Inhibitor I9 domain. The 273-residue stretch at 125-397 (SWGLARISSK…SKLLYNGINV (273 aa)) folds into the Peptidase S8 domain. Residues D157, H188, and S343 each act as charge relay system in the active site.

This sequence belongs to the peptidase S8 family.

It localises to the secreted. With respect to regulation, inhibited by 0.1 mM diisopropyl fluorophosphate (DFP), phenylmethanesulfonyl fluoride (PMSF), chymostatin and elastatinal. Not inhibited by N-alpha-p-tosyl-L-lysine chloromethylketone (TLCK), N-tosyl-L-phenylalanyl chloromethyl ketone (TPCK) or N-carbobenzoxy-L-phenylalanine chloromethylketone (ZPCK). In terms of biological role, serine protease. Hydrolyzes azocasein. Cleaves peptide bonds of the oxidized insulin B chain preferably at 15-Leu-|-Tyr-16, but also at 4-Gln-|-His-5 and 24-Phe-|-Phe-25, and to a lesser extent at 5-His-|-Leu-6 and 25-Phe-|-Tyr-26. Hydrolyzes amide bonds between amino acids and 7-amino-4-methylcoumarin (AMC) in vitro. This Penicillium citrinum protein is Subtilisin-like serine protease Pen c 1.